The sequence spans 242 residues: Beta-carotene ketolase (242 aa).

The catalysed reaction is all-trans-beta-carotene + 2 AH2 + 2 O2 = echinenone + 2 A + 3 H2O. The enzyme catalyses echinenone + 2 AH2 + 2 O2 = canthaxanthin + 2 A + 3 H2O. Its pathway is carotenoid biosynthesis; astaxanthin biosynthesis. In terms of biological role, converts beta-carotene to canthaxanthin via echinenone. The chain is Beta-carotene ketolase (crtW) from Paracoccus sp. (strain N81106 / MBIC 01143) (Agrobacterium aurantiacum).